The following is a 473-amino-acid chain: Ribulose bisphosphate carboxylase large chain (473 aa).

The substrate site is built by Asn-116 and Thr-166. Catalysis depends on Lys-168, which acts as the Proton acceptor. Lys-170 is a substrate binding site. The Mg(2+) site is built by Lys-194, Asp-196, and Glu-197. Residue Lys-194 is modified to N6-carboxylysine. Catalysis depends on His-287, which acts as the Proton acceptor. Substrate is bound by residues Arg-288, His-320, and Ser-372.

It belongs to the RuBisCO large chain family. Type I subfamily. In terms of assembly, heterohexadecamer of 8 large chains and 8 small chains. The cofactor is Mg(2+).

The enzyme catalyses 2 (2R)-3-phosphoglycerate + 2 H(+) = D-ribulose 1,5-bisphosphate + CO2 + H2O. It catalyses the reaction D-ribulose 1,5-bisphosphate + O2 = 2-phosphoglycolate + (2R)-3-phosphoglycerate + 2 H(+). RuBisCO catalyzes two reactions: the carboxylation of D-ribulose 1,5-bisphosphate, the primary event in carbon dioxide fixation, as well as the oxidative fragmentation of the pentose substrate. Both reactions occur simultaneously and in competition at the same active site. The protein is Ribulose bisphosphate carboxylase large chain of Rhodobacter capsulatus (strain ATCC BAA-309 / NBRC 16581 / SB1003).